Reading from the N-terminus, the 271-residue chain is Acetyl-coenzyme A carboxylase carboxyl transferase subunit alpha (271 aa).

The 247-residue stretch at Met-1 to Glu-247 folds into the CoA carboxyltransferase C-terminal domain.

It belongs to the AccA family. As to quaternary structure, acetyl-CoA carboxylase is a heterohexamer composed of biotin carboxyl carrier protein (AccB), biotin carboxylase (AccC) and two subunits each of ACCase subunit alpha (AccA) and ACCase subunit beta (AccD).

Its subcellular location is the cytoplasm. It catalyses the reaction N(6)-carboxybiotinyl-L-lysyl-[protein] + acetyl-CoA = N(6)-biotinyl-L-lysyl-[protein] + malonyl-CoA. Its pathway is lipid metabolism; malonyl-CoA biosynthesis; malonyl-CoA from acetyl-CoA: step 1/1. In terms of biological role, component of the acetyl coenzyme A carboxylase (ACC) complex. First, biotin carboxylase catalyzes the carboxylation of biotin on its carrier protein (BCCP) and then the CO(2) group is transferred by the carboxyltransferase to acetyl-CoA to form malonyl-CoA. The protein is Acetyl-coenzyme A carboxylase carboxyl transferase subunit alpha of Clostridium perfringens (strain ATCC 13124 / DSM 756 / JCM 1290 / NCIMB 6125 / NCTC 8237 / Type A).